The following is a 101-amino-acid chain: NADH-quinone oxidoreductase subunit K (101 aa).

The next 3 membrane-spanning stretches (helical) occupy residues 4–24 (LGHL…GIFL), 30–50 (IVLL…FIAF), and 62–82 (FVFF…AILV).

Belongs to the complex I subunit 4L family. As to quaternary structure, NDH-1 is composed of 14 different subunits. Subunits NuoA, H, J, K, L, M, N constitute the membrane sector of the complex.

The protein localises to the cell inner membrane. The enzyme catalyses a quinone + NADH + 5 H(+)(in) = a quinol + NAD(+) + 4 H(+)(out). In terms of biological role, NDH-1 shuttles electrons from NADH, via FMN and iron-sulfur (Fe-S) centers, to quinones in the respiratory chain. The immediate electron acceptor for the enzyme in this species is believed to be ubiquinone. Couples the redox reaction to proton translocation (for every two electrons transferred, four hydrogen ions are translocated across the cytoplasmic membrane), and thus conserves the redox energy in a proton gradient. This Xylella fastidiosa (strain Temecula1 / ATCC 700964) protein is NADH-quinone oxidoreductase subunit K.